The primary structure comprises 55 residues: Preprotein translocase subunit SecG (55 aa).

Residues 1–29 (MAKKSGSGLQSSAGLMRYYEADKNAVQVQ) lie on the Cytoplasmic side of the membrane. The chain crosses the membrane as a helical span at residues 30-51 (PKVVLIVGAIVGIAVLFLSAVN). The Extracellular segment spans residues 52 to 55 (GFWP).

The protein belongs to the SEC61-beta family. As to quaternary structure, component of the protein translocase complex. Heterotrimer consisting of alpha (SecY), beta (SecG) and gamma (SecE) subunits. Can form oligomers of the heterotrimer.

Its subcellular location is the cell membrane. Its function is as follows. Involved in protein export. The function of the beta subunit is unknown, but it may be involved in stabilization of the trimeric complex. The polypeptide is Preprotein translocase subunit SecG (Methanosarcina barkeri (strain Fusaro / DSM 804)).